The chain runs to 573 residues: MLO-like protein 2 (573 aa).

The Extracellular portion of the chain corresponds to Met1–Thr15. A helical transmembrane segment spans residues Trp16 to Ile36. The Cytoplasmic segment spans residues His37–Glu61. A helical membrane pass occupies residues Leu62 to Ile82. Over Cys83–His164 the chain is Extracellular. Residues Ile165–Gly185 traverse the membrane as a helical segment. The Cytoplasmic segment spans residues Lys186 to Asp287. A helical membrane pass occupies residues Phe288–Thr308. The Extracellular portion of the chain corresponds to Asn309 to Leu317. Residues Trp318–Ile338 traverse the membrane as a helical segment. Topologically, residues Thr339–Arg371 are cytoplasmic. The helical transmembrane segment at Phe372–Ala392 threads the bilayer. The Extracellular segment spans residues Trp393 to Leu415. The helical transmembrane segment at Val416 to Val436 threads the bilayer. The Cytoplasmic portion of the chain corresponds to Thr437–Lys573. Residues Asp450 to Arg471 are calmodulin-binding. The tract at residues Thr462 to Lys573 is disordered. Polar residues-rich tracts occupy residues Ser473–Ser490 and Asn498–Pro513. Ser512 is subject to Phosphoserine. A compositionally biased stretch (basic and acidic residues) spans Glu522–Ser548.

This sequence belongs to the MLO family.

It localises to the membrane. Its function is as follows. May be involved in modulation of pathogen defense and leaf cell death. Activity seems to be regulated by Ca(2+)-dependent calmodulin binding and seems not to require heterotrimeric G proteins. This chain is MLO-like protein 2 (MLO2), found in Arabidopsis thaliana (Mouse-ear cress).